We begin with the raw amino-acid sequence, 301 residues long: Haloalkane dehalogenase (301 aa).

In terms of domain architecture, AB hydrolase-1 spans 47-284 (PPIVLLHGEP…INASHFIQED (238 aa)). Asp-123 acts as the Nucleophile in catalysis. Residue Asp-250 is the Proton donor of the active site. His-279 (proton acceptor) is an active-site residue.

It belongs to the haloalkane dehalogenase family. Type 1 subfamily. Monomer.

The enzyme catalyses 1-haloalkane + H2O = a halide anion + a primary alcohol + H(+). Catalyzes hydrolytic cleavage of carbon-halogen bonds in halogenated aliphatic compounds, leading to the formation of the corresponding primary alcohols, halide ions and protons. This is Haloalkane dehalogenase from Mycolicibacterium paratuberculosis (strain ATCC BAA-968 / K-10) (Mycobacterium paratuberculosis).